A 527-amino-acid chain; its full sequence is Probable malate:quinone oxidoreductase (527 aa).

This sequence belongs to the MQO family. It depends on FAD as a cofactor.

The catalysed reaction is (S)-malate + a quinone = a quinol + oxaloacetate. Its pathway is carbohydrate metabolism; tricarboxylic acid cycle; oxaloacetate from (S)-malate (quinone route): step 1/1. This Pectobacterium atrosepticum (strain SCRI 1043 / ATCC BAA-672) (Erwinia carotovora subsp. atroseptica) protein is Probable malate:quinone oxidoreductase.